Consider the following 327-residue polypeptide: Annexin A8-like protein 1 (327 aa).

Annexin repeat units follow at residues 21–92 (FNPD…ALMY), 93–164 (PPYR…CLLQ), 177–249 (ALAL…TVVK), and 253–324 (NLHS…SLVG). The Ca(2+) site is built by M266, G268, G270, and D310.

The protein belongs to the annexin family.

This is Annexin A8-like protein 1 from Homo sapiens (Human).